A 119-amino-acid polypeptide reads, in one-letter code: Large ribosomal subunit protein bL20 (119 aa).

This sequence belongs to the bacterial ribosomal protein bL20 family.

In terms of biological role, binds directly to 23S ribosomal RNA and is necessary for the in vitro assembly process of the 50S ribosomal subunit. It is not involved in the protein synthesizing functions of that subunit. This chain is Large ribosomal subunit protein bL20, found in Levilactobacillus brevis (strain ATCC 367 / BCRC 12310 / CIP 105137 / JCM 1170 / LMG 11437 / NCIMB 947 / NCTC 947) (Lactobacillus brevis).